The following is a 273-amino-acid chain: ATP synthase subunit delta (273 aa).

The protein belongs to the ATPase delta chain family. As to quaternary structure, F-type ATPases have 2 components, F(1) - the catalytic core - and F(0) - the membrane proton channel. F(1) has five subunits: alpha(3), beta(3), gamma(1), delta(1), epsilon(1). F(0) has three main subunits: a(1), b(2) and c(10-14). The alpha and beta chains form an alternating ring which encloses part of the gamma chain. F(1) is attached to F(0) by a central stalk formed by the gamma and epsilon chains, while a peripheral stalk is formed by the delta and b chains.

The protein resides in the cell membrane. Functionally, f(1)F(0) ATP synthase produces ATP from ADP in the presence of a proton or sodium gradient. F-type ATPases consist of two structural domains, F(1) containing the extramembraneous catalytic core and F(0) containing the membrane proton channel, linked together by a central stalk and a peripheral stalk. During catalysis, ATP synthesis in the catalytic domain of F(1) is coupled via a rotary mechanism of the central stalk subunits to proton translocation. This protein is part of the stalk that links CF(0) to CF(1). It either transmits conformational changes from CF(0) to CF(1) or is implicated in proton conduction. In Corynebacterium diphtheriae (strain ATCC 700971 / NCTC 13129 / Biotype gravis), this protein is ATP synthase subunit delta.